The sequence spans 146 residues: Large ribosomal subunit protein uL16 (146 aa).

It belongs to the universal ribosomal protein uL16 family. As to quaternary structure, part of the 50S ribosomal subunit.

Functionally, binds 23S rRNA and is also seen to make contacts with the A and possibly P site tRNAs. The protein is Large ribosomal subunit protein uL16 of Thermomicrobium roseum (strain ATCC 27502 / DSM 5159 / P-2).